A 155-amino-acid polypeptide reads, in one-letter code: Transcriptional repressor NrdR (155 aa).

Polar residues predominate over residues 1–11; sequence MECPNCHQNAS. Residues 1 to 22 form a disordered region; it reads MECPNCHQNASRVIDSRPSDEN. Residues 3-34 fold into a zinc finger; it reads CPNCHQNASRVIDSRPSDENRAIRRRRECENC. The ATP-cone domain maps to 49-139; it reads LLVIKNDGTR…IYREFKDMSS (91 aa).

This sequence belongs to the NrdR family. The cofactor is Zn(2+).

Its function is as follows. Negatively regulates transcription of bacterial ribonucleotide reductase nrd genes and operons by binding to NrdR-boxes. The chain is Transcriptional repressor NrdR from Lactobacillus helveticus (strain DPC 4571).